The chain runs to 94 residues: Large ribosomal subunit protein uL24c (94 aa).

It belongs to the universal ribosomal protein uL24 family. In terms of assembly, part of the 50S ribosomal subunit.

The protein resides in the plastid. The protein localises to the chloroplast. In terms of biological role, one of two assembly initiator proteins, it binds directly to the 5'-end of the 23S rRNA, where it nucleates assembly of the 50S subunit. The chain is Large ribosomal subunit protein uL24c (rpl24) from Cyanidium caldarium (Red alga).